The chain runs to 483 residues: ATP synthase subunit beta (483 aa).

169 to 176 (GGAGVGKT) provides a ligand contact to ATP.

This sequence belongs to the ATPase alpha/beta chains family. F-type ATPases have 2 components, CF(1) - the catalytic core - and CF(0) - the membrane proton channel. CF(1) has five subunits: alpha(3), beta(3), gamma(1), delta(1), epsilon(1). CF(0) has three main subunits: a(1), b(2) and c(9-12). The alpha and beta chains form an alternating ring which encloses part of the gamma chain. CF(1) is attached to CF(0) by a central stalk formed by the gamma and epsilon chains, while a peripheral stalk is formed by the delta and b chains.

Its subcellular location is the cell membrane. It catalyses the reaction ATP + H2O + 4 H(+)(in) = ADP + phosphate + 5 H(+)(out). Functionally, produces ATP from ADP in the presence of a proton gradient across the membrane. The catalytic sites are hosted primarily by the beta subunits. The sequence is that of ATP synthase subunit beta from Rhodococcus opacus (strain B4).